We begin with the raw amino-acid sequence, 263 residues long: Hydroxyacylglutathione hydrolase (263 aa).

Histidine 56, histidine 58, aspartate 60, histidine 61, histidine 115, aspartate 135, and histidine 175 together coordinate Zn(2+).

This sequence belongs to the metallo-beta-lactamase superfamily. Glyoxalase II family. In terms of assembly, monomer. Zn(2+) is required as a cofactor.

It catalyses the reaction an S-(2-hydroxyacyl)glutathione + H2O = a 2-hydroxy carboxylate + glutathione + H(+). It functions in the pathway secondary metabolite metabolism; methylglyoxal degradation; (R)-lactate from methylglyoxal: step 2/2. Thiolesterase that catalyzes the hydrolysis of S-D-lactoyl-glutathione to form glutathione and D-lactic acid. This Nitrosococcus oceani (strain ATCC 19707 / BCRC 17464 / JCM 30415 / NCIMB 11848 / C-107) protein is Hydroxyacylglutathione hydrolase.